Consider the following 22-residue polypeptide: KRNGCCNCSSKWCRDHSRCCGR.

Positions 1–2 (KR) are excised as a propeptide. 7 disulfides stabilise this stretch: C5-C13, C5-C19, C5-C20, C6-C13, C6-C19, C8-C19, and C8-C20. Pharmacophore key residues stretches follow at residues 14–16 (RDH) and 18–19 (RC). C20 carries the post-translational modification Cysteine amide.

Belongs to the conotoxin M superfamily. In terms of assembly, monomer. Post-translationally, toxins with three different disulfide connectivities have been synthesized. The conotoxin mu-KIIIA-P1 shows the connectivity C1-C5, C2-C4, and C3-C6, whereas mu-KIIIA-P2 shows the connectivity C1-C6, C2-C4, and C3-C5. The conotoxin mu-KIIIA-N has the 'native' fold of the mu-conotoxin family (C1-C4, C2-C5, and C3-C6). Mu-KIIIA-P1 and mu-KIIIA-P2 are obtained by both thermodynamic oxidative folding and regioselective synthesis. Mu-KIIIA-P1 is the major oxidative folding product. Mu-KIIIA-N is only obtained by regioselective synthesis. As to expression, expressed by the venom duct.

Its subcellular location is the secreted. Its function is as follows. Mu-conotoxin KIIIA-P1: mu-conotoxins block voltage-gated sodium channels (Nav). This toxin potently blocks Nav1.2/SCN2A (IC(50)5-124 nM), Nav1.4/SCN4A (IC(50)=20-90 nM), and Nav1.7/SCN9A (IC(50)=290-413 nM). It moderately blocks Nav1.1/SCN1A, and mNav1.6/SCN8A. It also shows a very low activity on Nav1.3/SCN3A. This toxin binds a microsite within the pore different from the tetrodotoxin binding site 1 (tested on Nav1.2). The block is partial, with a residual current that can be completely blocked by TTX. The toxin probably docks at a more superficial site in the outer vestibule of the channel than does TTX. On rNav1.2/SCN2A, it produces a block that is only partially reversible. The block of Nav1.7 is modified when beta-subunits are coexpressed with the alpha subunit. Hence, blocks of channels containing beta-1 and beta-3 subunits are more potent (compared to channels without beta subunits), whereas blocks of channels containing beta-2 and beta-4 subunits are less potent (compared to channels without beta subunits). Functionally, mu-conotoxin KIIIA-P2: This toxin potently blocks Nav1.2/SCN2A (Kd=230 nM, IC(50)=1.37 uM) and Nav1.4/SCN4A (Kd=830 nM, IC(50)=2 uM). It also moderately blocks Nav1.7/SCN9A (Kd=1.57 uM, IC(50)=5.4 uM). In addition, this toxin may also inhibit other sodium channels, as does Mu-conotoxin KIIIA-P1. In terms of biological role, mu-conotoxin KIIIA-N: This toxin moderately blocks Nav1.2/SCN2A (IC(50)=875 nM), Nav1.4/SCN4A (IC(50)=472 nM), and Nav1.7/SCN9A (IC(50)=887 nM). Mu-conotoxin KIIIB-P1: This toxin potently blocks Nav1.2/SCN2A (Kd=470 nM). In addition, this toxin may also inhibit other sodium channels, as does Mu-conotoxin KIIIA-P1. Its function is as follows. Mu-conotoxin KIIIB-P2: This toxin potently blocks Nav1.2/SCN2A (Kd=26 nM). In addition, this toxin may also inhibit other sodium channels, as does Mu-conotoxin KIIIA-P1. The protein is Mu-conotoxin KIIIB of Conus kinoshitai (Kinoshita's cone).